The chain runs to 216 residues: Octanoyltransferase (216 aa).

The BPL/LPL catalytic domain maps to 29–209 (DRAGECVWLL…SFDAVFGPCP (181 aa)). Residues 68-75 (RGGQYTYH), 140-142 (AIG), and 153-155 (GFA) contribute to the substrate site. Cysteine 171 functions as the Acyl-thioester intermediate in the catalytic mechanism.

This sequence belongs to the LipB family.

It is found in the cytoplasm. It carries out the reaction octanoyl-[ACP] + L-lysyl-[protein] = N(6)-octanoyl-L-lysyl-[protein] + holo-[ACP] + H(+). The protein operates within protein modification; protein lipoylation via endogenous pathway; protein N(6)-(lipoyl)lysine from octanoyl-[acyl-carrier-protein]: step 1/2. Catalyzes the transfer of endogenously produced octanoic acid from octanoyl-acyl-carrier-protein onto the lipoyl domains of lipoate-dependent enzymes. Lipoyl-ACP can also act as a substrate although octanoyl-ACP is likely to be the physiological substrate. This is Octanoyltransferase from Rhodospirillum rubrum (strain ATCC 11170 / ATH 1.1.1 / DSM 467 / LMG 4362 / NCIMB 8255 / S1).